The sequence spans 236 residues: Rho-related GTP-binding protein RhoV (236 aa).

The segment at 1-27 is disordered; that stretch reads MPPRELSEAESSPLRSPTPPPGRGSAS. Position 25 is a phosphoserine (serine 25). GTP contacts are provided by residues 38–45, 85–89, and 143–146; these read GDGAVGKS, DTAGQ, and TQAD. The S-palmitoyl cysteine moiety is linked to residue cysteine 234.

The protein belongs to the small GTPase superfamily. Rho family. Interacts with PAK2. The cofactor is Mg(2+).

It localises to the cell membrane. Its subcellular location is the endosome membrane. In terms of biological role, plays a role in the control of the actin cytoskeleton via activation of the JNK pathway. The chain is Rho-related GTP-binding protein RhoV from Bos taurus (Bovine).